A 203-amino-acid chain; its full sequence is Thymidylate kinase (203 aa).

14–21 (GGEGIGKS) contacts ATP.

Belongs to the thymidylate kinase family.

It carries out the reaction dTMP + ATP = dTDP + ADP. Its function is as follows. Phosphorylation of dTMP to form dTDP in both de novo and salvage pathways of dTTP synthesis. This is Thymidylate kinase from Rickettsia rickettsii (strain Iowa).